The primary structure comprises 1670 residues: MSSVKVAVRVRPFNSREIARESKCIIEMAGATTAITNPKVPPNTSDSVKRFNFDYSYWSHDHHDADFSTQSMVYKDIGEEMLQHSFDGYNVCIFAYGQTGAGKSYTMMGRQEEQQEGIIPMICKDLFTRIQDTETDDLKYSVEVSYMEIYCERVRDLLNPKNKGNLRVREHPLLGPYVEDLSKLAVTDYQDIHDLIDEGNKARTVAATNMNETSSRSHAVFTIFFTQRRHDLMTNLTTEKVSKISLVDLAGSERADSTGAKGTRLKEGANINKSLTTLGKVISALAEVASKKKNTKKADFIPYRDSALTWLLRENLGGNSKTAMIAAISPADINYDETLSTLRYADRAKQIVCKAVVNEDANAKLIRELKEEIQKLRDLLKAEGIEVQEEDELTKSTVIKSPTKSRNRNGSTTEMAVDQLQASEKLIAELNETWEEKLKRTEEIRVQREAVFAEMGVAVKEDGITVGVFSPKKTPHLVNLNEDPNLSECLLYYIKEGLTRLGTHEANVPQDIQLSGSHILKEHCTFENKNSTVTLLPHKDAIIYVNGRKLVEPEVLKTGSRVILGKNHVFRFTNPEQARELRDKIETENEAENEVEKTDTQQVDWNFAQCELLEKQGIDLKAEMKKRLDNLEEQYKREKLQADQQFEEQRKTYEARIDALQKQVEEQSMTMSMYSSYSPEDFHQEEDVYTNPMYESCWTAREAGLAAWAFRKWRYHQFTSLRDDLWGNAIFLKEANAISVELKKKVQFQFTLLTDTLYSPLPPELASTVAPVHQEDEFGAPPVSKTLVAVEVTDTKNGATHHWSLEKLRQRLELMREMYHNEAEMSPTSPDYNVESLTGGDPFYDRFPWFRMVGRSFIYLSNLLYPVPLVHKVAIVNERGDVRGYLRIAVQPVLDEESIDFNNGVKQSARLVFNEDDAKPKYRALNEKDDVQRYIDNGGLDSKLEELEDVDSGRGIDSNSASECHENSEEPGEHLQVGKEFTFRVTVLQATGIGAEYADIFCQFNFLHRHEEAFSTEPVKNSASGAPLGFYHVQNITVPVTKSFIEYLKTQPIMFKIFGHYQTHPLHKDAKQDFVSRPPPRRMLPPSIPISQPVRSPKFGPLPCAPTSTVLAKHDVLVWFEICELAPNGEYVPSVVEHSDDLPCRGLFLLHQGIQRRIRITIVHEPTTEVKWKDINELVVGRIRNTPESSDEQDEDACVLSLGLFPGEALEVPGDDRSFYRFEAAWDSSLHNSALLNRVSQGGETIYITLSAYLELENCARPAIITKDLSMVIYGRDARTGPRSLKHLFSGQYRNPEANRLTGVYELALRRASEAGSPGVQRRQRRVLDTSSTYVRGEENLHGWRPRGDSLIFDHQWELEKLTRLEEVGRMRHLLLLRERLGMDTNPNPTTKTEKDVCNLAARAATSPVHMVIPQSPQTPVKDPQQIIPEREYNQREQDLMLKCLKLVQGRYTKSEANDTQTQSDVSPSDEGCADMTVSCISSNSMENNKFVIRRRLCSPDRADAPNGWEAPAPATQPALPLRLYVPELEEIRVSPVVARKGLLNVLEHGGSGWKKRWVIVRRPYVFIYRSEKDPVERAVLNLATAHVECSEDQAAMVKIPNTFSVVTKHRGYLLQTLGDKEVHDWLYAINPLLAGQIKSRLARRTLEPASQTASQIQATNAANANSASK.

The Kinesin motor domain maps to 3–351 (SVKVAVRVRP…LRYADRAKQI (349 aa)). ATP is bound at residue 97-104 (GQTGAGKS). Residues 358–436 (NEDANAKLIR…IAELNETWEE (79 aa)) are a coiled coil. Residues 499–565 (TRLGTHEANV…LKTGSRVILG (67 aa)) form the FHA domain. A coiled-coil region spans residues 576 to 674 (EQARELRDKI…EEQSMTMSMY (99 aa)). The disordered stretch occupies residues 951 to 975 (DSGRGIDSNSASECHENSEEPGEHL). A compositionally biased stretch (basic and acidic residues) spans 963–975 (ECHENSEEPGEHL). Residue Thr1406 is modified to Phosphothreonine. Position 1416 is a phosphoserine (Ser1416). The residue at position 1419 (Thr1419) is a Phosphothreonine. Residues 1537 to 1635 (VVARKGLLNV…WLYAINPLLA (99 aa)) form the PH domain.

It belongs to the TRAFAC class myosin-kinesin ATPase superfamily. Kinesin family. Unc-104 subfamily. Monomer. Interacts with Arl8. As to expression, expressed in muscles.

It is found in the cytoplasm. Its subcellular location is the cytoskeleton. The protein localises to the cell projection. The protein resides in the axon. In terms of biological role, required for presynaptic maturation, has a role in axonal transport of dense-core vesicles carrying synaptic vesicle precursors, components required for the morphological transformation of axonal growth cones to mature boutons. The polypeptide is Kinesin-like protein unc-104 (unc-104) (Drosophila melanogaster (Fruit fly)).